The primary structure comprises 197 residues: Thymidylate kinase (197 aa).

Glycine 7–serine 14 contributes to the ATP binding site.

It belongs to the thymidylate kinase family.

It carries out the reaction dTMP + ATP = dTDP + ADP. Its function is as follows. Phosphorylation of dTMP to form dTDP in both de novo and salvage pathways of dTTP synthesis. In Fervidobacterium nodosum (strain ATCC 35602 / DSM 5306 / Rt17-B1), this protein is Thymidylate kinase.